The chain runs to 199 residues: Transcriptional regulatory protein EntR (199 aa).

The region spanning 3–124 (KILVIDRCHF…TLSHTIQEAL (122 aa)) is the Response regulatory domain. Asp-8 bears the 4-aspartylphosphate mark. The HTH luxR-type domain occupies 133–198 (PKNATPLLTP…SPFLSLPGKG (66 aa)). Residues 157–176 (NNAIAAALSIHGKTVYTYKR) constitute a DNA-binding region (H-T-H motif).

Its function is as follows. May serve to repress the entericidin locus in C.freundii. This is Transcriptional regulatory protein EntR (ecnR) from Citrobacter freundii.